Consider the following 227-residue polypeptide: Cytochrome c oxidase subunit 2 (227 aa).

Residues M1 to S14 are Mitochondrial intermembrane-facing. Residues P15–M45 traverse the membrane as a helical segment. Residues L46 to Q59 lie on the Mitochondrial matrix side of the membrane. The chain crosses the membrane as a helical span at residues E60 to M87. Over D88–V227 the chain is Mitochondrial intermembrane. Residues H161, C196, E198, C200, H204, and M207 each contribute to the Cu cation site. Position 198 (E198) interacts with Mg(2+). A Phosphotyrosine modification is found at Y218.

This sequence belongs to the cytochrome c oxidase subunit 2 family. Component of the cytochrome c oxidase (complex IV, CIV), a multisubunit enzyme composed of 14 subunits. The complex is composed of a catalytic core of 3 subunits MT-CO1, MT-CO2 and MT-CO3, encoded in the mitochondrial DNA, and 11 supernumerary subunits COX4I, COX5A, COX5B, COX6A, COX6B, COX6C, COX7A, COX7B, COX7C, COX8 and NDUFA4, which are encoded in the nuclear genome. The complex exists as a monomer or a dimer and forms supercomplexes (SCs) in the inner mitochondrial membrane with NADH-ubiquinone oxidoreductase (complex I, CI) and ubiquinol-cytochrome c oxidoreductase (cytochrome b-c1 complex, complex III, CIII), resulting in different assemblies (supercomplex SCI(1)III(2)IV(1) and megacomplex MCI(2)III(2)IV(2)). Found in a complex with TMEM177, COA6, COX18, COX20, SCO1 and SCO2. Interacts with TMEM177 in a COX20-dependent manner. Interacts with COX20. Interacts with COX16. It depends on Cu cation as a cofactor.

It localises to the mitochondrion inner membrane. It catalyses the reaction 4 Fe(II)-[cytochrome c] + O2 + 8 H(+)(in) = 4 Fe(III)-[cytochrome c] + 2 H2O + 4 H(+)(out). Functionally, component of the cytochrome c oxidase, the last enzyme in the mitochondrial electron transport chain which drives oxidative phosphorylation. The respiratory chain contains 3 multisubunit complexes succinate dehydrogenase (complex II, CII), ubiquinol-cytochrome c oxidoreductase (cytochrome b-c1 complex, complex III, CIII) and cytochrome c oxidase (complex IV, CIV), that cooperate to transfer electrons derived from NADH and succinate to molecular oxygen, creating an electrochemical gradient over the inner membrane that drives transmembrane transport and the ATP synthase. Cytochrome c oxidase is the component of the respiratory chain that catalyzes the reduction of oxygen to water. Electrons originating from reduced cytochrome c in the intermembrane space (IMS) are transferred via the dinuclear copper A center (CU(A)) of subunit 2 and heme A of subunit 1 to the active site in subunit 1, a binuclear center (BNC) formed by heme A3 and copper B (CU(B)). The BNC reduces molecular oxygen to 2 water molecules using 4 electrons from cytochrome c in the IMS and 4 protons from the mitochondrial matrix. This is Cytochrome c oxidase subunit 2 (MT-CO2) from Canis simensis (Ethiopian wolf).